The following is a 282-amino-acid chain: 5'-nucleotidase SurE (282 aa).

A divalent metal cation contacts are provided by D12, D13, S43, and N98.

The protein belongs to the SurE nucleotidase family. A divalent metal cation is required as a cofactor.

The protein localises to the cytoplasm. It catalyses the reaction a ribonucleoside 5'-phosphate + H2O = a ribonucleoside + phosphate. In terms of biological role, nucleotidase that shows phosphatase activity on nucleoside 5'-monophosphates. In Hyperthermus butylicus (strain DSM 5456 / JCM 9403 / PLM1-5), this protein is 5'-nucleotidase SurE.